Consider the following 96-residue polypeptide: Co-chaperonin GroES (96 aa).

This sequence belongs to the GroES chaperonin family. In terms of assembly, heptamer of 7 subunits arranged in a ring. Interacts with the chaperonin GroEL.

The protein localises to the cytoplasm. Functionally, together with the chaperonin GroEL, plays an essential role in assisting protein folding. The GroEL-GroES system forms a nano-cage that allows encapsulation of the non-native substrate proteins and provides a physical environment optimized to promote and accelerate protein folding. GroES binds to the apical surface of the GroEL ring, thereby capping the opening of the GroEL channel. The sequence is that of Co-chaperonin GroES from Verminephrobacter eiseniae (strain EF01-2).